The primary structure comprises 253 residues: Ribonuclease HII (253 aa).

The RNase H type-2 domain maps to 30–221 (GPVAGVDEVG…VRRLVVDGEP (192 aa)). A divalent metal cation is bound by residues aspartate 36, glutamate 37, and aspartate 130.

Belongs to the RNase HII family. Mn(2+) serves as cofactor. It depends on Mg(2+) as a cofactor.

It localises to the cytoplasm. The enzyme catalyses Endonucleolytic cleavage to 5'-phosphomonoester.. Its function is as follows. Endonuclease that specifically degrades the RNA of RNA-DNA hybrids. The protein is Ribonuclease HII of Mycolicibacterium gilvum (strain PYR-GCK) (Mycobacterium gilvum (strain PYR-GCK)).